The chain runs to 632 residues: tRNA uridine 5-carboxymethylaminomethyl modification enzyme MnmG (632 aa).

FAD contacts are provided by residues 16 to 21 (GAGHAG), Val-128, and Ser-183. A disordered region spans residues 206 to 225 (PRVNGNTIDYSKTEEEPGDK). A compositionally biased stretch (basic and acidic residues) spans 216–225 (SKTEEEPGDK). 277-291 (GPRYCPSIEDKVVRF) contacts NAD(+). Gln-374 contacts FAD.

It belongs to the MnmG family. In terms of assembly, homodimer. Heterotetramer of two MnmE and two MnmG subunits. The cofactor is FAD.

The protein resides in the cytoplasm. In terms of biological role, NAD-binding protein involved in the addition of a carboxymethylaminomethyl (cmnm) group at the wobble position (U34) of certain tRNAs, forming tRNA-cmnm(5)s(2)U34. This is tRNA uridine 5-carboxymethylaminomethyl modification enzyme MnmG from Lactobacillus acidophilus (strain ATCC 700396 / NCK56 / N2 / NCFM).